Here is a 588-residue protein sequence, read N- to C-terminus: Calicin (588 aa).

The region spanning 28–98 (WDMALTVDHH…FYSGKVVISE (71 aa)) is the BTB domain. One can recognise a BACK domain in the interval 133–235 (CLRYLFLAEL…NAVSNKTLMF (103 aa)). Residue S149 is modified to Phosphoserine. Kelch repeat units lie at residues 280-327 (SVVI…AAGR), 328-375 (YIYI…TCGG), 377-423 (VYSV…TKGD), 425-475 (NLYI…SFHQ), 476-525 (DNIL…IGDS), and 526-580 (KVFV…LAKL).

In terms of assembly, interacts with CYLC1; the interaction may be relevant for proper acrosome attachment to the nuclear envelope. As to expression, expressed in testis and in spermatozoa.

The protein localises to the cytoplasm. It localises to the cytoskeleton. It is found in the perinuclear theca. The protein resides in the calyx. Its function is as follows. Required for both nuclear and acrosomal shaping during spermiogenesis. The polypeptide is Calicin (Ccin) (Mus musculus (Mouse)).